We begin with the raw amino-acid sequence, 38 residues long: Photosystem II reaction center protein X 1 (38 aa).

Residues 8–28 form a helical membrane-spanning segment; sequence FLWSLLYGAVVLGLLFGAIVF.

It belongs to the PsbX family. Type 1 subfamily. In terms of assembly, PSII is composed of 1 copy each of membrane proteins PsbA, PsbB, PsbC, PsbD, PsbE, PsbF, PsbH, PsbI, PsbJ, PsbK, PsbL, PsbM, PsbT, PsbX, PsbY, PsbZ, Psb30/Ycf12, peripheral proteins PsbO, CyanoQ (PsbQ), PsbU, PsbV and a large number of cofactors. It forms dimeric complexes.

The protein localises to the cellular thylakoid membrane. In terms of biological role, involved in the binding and/or turnover of quinones at the Q(B) site of photosystem II (PSII). PSII is a light-driven water plastoquinone oxidoreductase, using light energy to abstract electrons from H(2)O, generating a proton gradient subsequently used for ATP formation. This Synechococcus sp. (strain JA-3-3Ab) (Cyanobacteria bacterium Yellowstone A-Prime) protein is Photosystem II reaction center protein X 1.